We begin with the raw amino-acid sequence, 230 residues long: NAD-dependent protein deacylase 1 (230 aa).

In terms of domain architecture, Deacetylase sirtuin-type spans 1 to 226; the sequence is MESGIPTYRE…SHLSAFLSRE (226 aa). Positions 41 and 44 each coordinate substrate. 75-78 is a binding site for NAD(+); the sequence is QNID. The Proton acceptor role is filled by histidine 93. Zn(2+) is bound by residues cysteine 101, cysteine 104, cysteine 128, and cysteine 131. NAD(+) contacts are provided by residues 168–170, 194–196, and alanine 212; these read GTS and NTV.

This sequence belongs to the sirtuin family. Class III subfamily. Zn(2+) is required as a cofactor.

It localises to the cytoplasm. It carries out the reaction N(6)-acetyl-L-lysyl-[protein] + NAD(+) + H2O = 2''-O-acetyl-ADP-D-ribose + nicotinamide + L-lysyl-[protein]. It catalyses the reaction N(6)-succinyl-L-lysyl-[protein] + NAD(+) + H2O = 2''-O-succinyl-ADP-D-ribose + nicotinamide + L-lysyl-[protein]. NAD-dependent lysine deacetylase and desuccinylase that specifically removes acetyl and succinyl groups on target proteins. Modulates the activities of several proteins which are inactive in their acylated form. This is NAD-dependent protein deacylase 1 from Pseudomonas syringae pv. tomato (strain ATCC BAA-871 / DC3000).